Reading from the N-terminus, the 353-residue chain is GTPase Obg (353 aa).

Residues 1-159 form the Obg domain; sequence MKFLDEAKVY…RWIWLRLKLI (159 aa). Residues 160–327 enclose the OBG-type G domain; that stretch reads ADAGLVGLPN…ALRALAAVIG (168 aa). GTP-binding positions include 166 to 173, 191 to 195, 212 to 215, 279 to 282, and 308 to 310; these read GLPNAGKS, FTTLH, DIPG, NKID, and SGV. The Mg(2+) site is built by Ser-173 and Thr-193.

This sequence belongs to the TRAFAC class OBG-HflX-like GTPase superfamily. OBG GTPase family. Monomer. It depends on Mg(2+) as a cofactor.

It is found in the cytoplasm. An essential GTPase which binds GTP, GDP and possibly (p)ppGpp with moderate affinity, with high nucleotide exchange rates and a fairly low GTP hydrolysis rate. Plays a role in control of the cell cycle, stress response, ribosome biogenesis and in those bacteria that undergo differentiation, in morphogenesis control. This chain is GTPase Obg, found in Rhodopseudomonas palustris (strain BisB5).